A 259-amino-acid chain; its full sequence is 5'-nucleotidase SurE (259 aa).

Positions 8, 9, 39, and 93 each coordinate a divalent metal cation.

It belongs to the SurE nucleotidase family. A divalent metal cation is required as a cofactor.

The protein localises to the cytoplasm. The catalysed reaction is a ribonucleoside 5'-phosphate + H2O = a ribonucleoside + phosphate. Functionally, nucleotidase that shows phosphatase activity on nucleoside 5'-monophosphates. The protein is 5'-nucleotidase SurE of Thermococcus kodakarensis (strain ATCC BAA-918 / JCM 12380 / KOD1) (Pyrococcus kodakaraensis (strain KOD1)).